The sequence spans 370 residues: Mitochondrial distribution and morphology protein 10 (370 aa).

The protein belongs to the MDM10 family. As to quaternary structure, component of the ER-mitochondria encounter structure (ERMES) or MDM complex, composed of mmm1, mdm10, mdm12 and mdm34. Associates with the mitochondrial outer membrane sorting assembly machinery SAM(core) complex.

It localises to the mitochondrion outer membrane. Component of the ERMES/MDM complex, which serves as a molecular tether to connect the endoplasmic reticulum and mitochondria. Components of this complex are involved in the control of mitochondrial shape and protein biogenesis and may function in phospholipid exchange. mdm10 is involved in the late assembly steps of the general translocase of the mitochondrial outer membrane (TOM complex). Functions in the tom40-specific route of the assembly of outer membrane beta-barrel proteins, including the association of tom40 with the receptor tom22 and small TOM proteins. Can associate with the SAM(core) complex as well as the mdm12-mmm1 complex, both involved in late steps of the major beta-barrel assembly pathway, that is responsible for biogenesis of all outer membrane beta-barrel proteins. May act as a switch that shuttles between both complexes and channels precursor proteins into the tom40-specific pathway. Plays a role in mitochondrial morphology and in the inheritance of mitochondria. This is Mitochondrial distribution and morphology protein 10 (mdm10) from Schizosaccharomyces pombe (strain 972 / ATCC 24843) (Fission yeast).